Reading from the N-terminus, the 228-residue chain is Orotidine 5'-phosphate decarboxylase (228 aa).

Substrate contacts are provided by residues aspartate 8, lysine 30, 59 to 68 (DLKLHDIPNT), threonine 118, arginine 178, glutamine 187, glycine 207, and arginine 208. Catalysis depends on lysine 61, which acts as the Proton donor.

The protein belongs to the OMP decarboxylase family. Type 1 subfamily. Homodimer.

The enzyme catalyses orotidine 5'-phosphate + H(+) = UMP + CO2. It functions in the pathway pyrimidine metabolism; UMP biosynthesis via de novo pathway; UMP from orotate: step 2/2. Functionally, catalyzes the decarboxylation of orotidine 5'-monophosphate (OMP) to uridine 5'-monophosphate (UMP). The sequence is that of Orotidine 5'-phosphate decarboxylase from Wolinella succinogenes (strain ATCC 29543 / DSM 1740 / CCUG 13145 / JCM 31913 / LMG 7466 / NCTC 11488 / FDC 602W) (Vibrio succinogenes).